Consider the following 203-residue polypeptide: Transmembrane protein 269 (203 aa).

3 helical membrane passes run Gly60–Ile80, Phe124–Pro144, and Leu157–Tyr177.

It is found in the membrane. This chain is Transmembrane protein 269, found in Homo sapiens (Human).